A 782-amino-acid polypeptide reads, in one-letter code: Cyclic nucleotide-gated channel beta-3 (782 aa).

2 disordered regions span residues 1–111 and 147–168; these read MFKS…PKSK and GDIS…PSTQ. Over 1-213 the chain is Cytoplasmic; that stretch reads MFKSLTIKSN…SIDSYTDRLY (213 aa). 2 stretches are compositionally biased toward basic and acidic residues: residues 13-25 and 57-73; these read KPRE…KQDP and EESH…KNSL. Composition is skewed to polar residues over residues 74-83 and 152-168; these read RDLTTNPNHQ and PEAS…PSTQ. Residues 214–237 traverse the membrane as a helical segment; that stretch reads LLWLLLVTIAYNWNCWLIPLRLVF. Over 238 to 244 the chain is Extracellular; it reads PYQTPDN. Residues 245-265 traverse the membrane as a helical segment; it reads THYWFITDITCDIIYLCDMLL. Residues 266-294 are Cytoplasmic-facing; the sequence is IQPRLQFIKGGDIMVDSNELKRHYRSSTK. The chain crosses the membrane as a helical span at residues 295-312; sequence FQLDVASVMPFDVFYLFF. The Extracellular portion of the chain corresponds to 313-315; the sequence is GFN. Residues 316 to 330 traverse the membrane as a helical segment; it reads PVFRMNRILKYTSFF. Residues 331 to 343 lie on the Cytoplasmic side of the membrane; it reads EFNHHLESIMDKA. Residues 343–442 form an ion conduction pathway region; sequence AYIYRVIRTT…IGQMQDVIGA (100 aa). Residues 344-366 form a helical membrane-spanning segment; the sequence is YIYRVIRTTGYLLYTLHINACIY. Over 367-388 the chain is Extracellular; that stretch reads YWASDYEGIGSTKWVYNGEGNK. A run of 2 helical transmembrane segments spans residues 389 to 415 and 416 to 440; these read YLRC…SFEI and VFQL…QDVI. A selectivity filter region spans residues 402-405; the sequence is TIGG. Residues 441–782 are Cytoplasmic-facing; the sequence is GAATANQNNF…TIEVKEKAKQ (342 aa). The tract at residues 445–521 is C-linker; it reads ANQNNFRISM…SIISKVELFK (77 aa). Positions 525–641 are cyclic nucleotide-binding domain; that stretch reads TQMIYDMLLR…LLMKKASVLL (117 aa). 4 residues coordinate 3',5'-cyclic GMP: G586, E587, R599, and T600. Residues 692–724 are disordered; sequence EQTIQKTSENSEEGGGKRREYEDKEREPSEKIL. Positions 705 to 724 are enriched in basic and acidic residues; the sequence is GGGKRREYEDKEREPSEKIL.

The protein belongs to the cyclic nucleotide-gated cation channel (TC 1.A.1.5) family. CNGB3 subfamily. Forms heterotetrameric channels composed of CNGA3 and CNGB3 subunits with 3:1 stoichiometry.

Its subcellular location is the cell membrane. It carries out the reaction Ca(2+)(in) = Ca(2+)(out). The catalysed reaction is Na(+)(in) = Na(+)(out). It catalyses the reaction K(+)(in) = K(+)(out). The enzyme catalyses NH4(+)(in) = NH4(+)(out). It carries out the reaction Rb(+)(in) = Rb(+)(out). The catalysed reaction is Li(+)(in) = Li(+)(out). It catalyses the reaction Cs(+)(in) = Cs(+)(out). Its function is as follows. Pore-forming subunit of the cone cyclic nucleotide-gated channel. Mediates cone photoresponses at bright light converting transient changes in intracellular cGMP levels into electrical signals. In the dark, cGMP levels are high and keep the channel open enabling a steady inward current carried by Na(+) and Ca(2+) ions that leads to membrane depolarization and neurotransmitter release from synaptic terminals. Upon photon absorption cGMP levels decline leading to channel closure and membrane hyperpolarization that ultimately slows neurotransmitter release and signals the presence of light, the end point of the phototransduction cascade. Conducts cGMP- and cAMP-gated ion currents, with permeability for monovalent and divalent cations. This Canis lupus familiaris (Dog) protein is Cyclic nucleotide-gated channel beta-3.